The chain runs to 131 residues: Sulfurtransferase TusD (131 aa).

Catalysis depends on C81, which acts as the Cysteine persulfide intermediate.

This sequence belongs to the DsrE/TusD family. Heterohexamer, formed by a dimer of trimers. The hexameric TusBCD complex contains 2 copies each of TusB, TusC and TusD. The TusBCD complex interacts with TusE.

The protein localises to the cytoplasm. Functionally, part of a sulfur-relay system required for 2-thiolation of 5-methylaminomethyl-2-thiouridine (mnm(5)s(2)U) at tRNA wobble positions. Accepts sulfur from TusA and transfers it in turn to TusE. The chain is Sulfurtransferase TusD from Photorhabdus laumondii subsp. laumondii (strain DSM 15139 / CIP 105565 / TT01) (Photorhabdus luminescens subsp. laumondii).